The following is a 375-amino-acid chain: Queuine tRNA-ribosyltransferase (375 aa).

Asp89 functions as the Proton acceptor in the catalytic mechanism. Substrate contacts are provided by residues 89-93 (DSGGF), Asp143, Gln187, and Gly214. The segment at 245–251 (GVGKPED) is RNA binding. Asp264 acts as the Nucleophile in catalysis. The tract at residues 269-273 (TRNAR) is RNA binding; important for wobble base 34 recognition. The Zn(2+) site is built by Cys302, Cys304, Cys307, and His333.

Belongs to the queuine tRNA-ribosyltransferase family. As to quaternary structure, homodimer. Within each dimer, one monomer is responsible for RNA recognition and catalysis, while the other monomer binds to the replacement base PreQ1. Zn(2+) is required as a cofactor.

It catalyses the reaction 7-aminomethyl-7-carbaguanine + guanosine(34) in tRNA = 7-aminomethyl-7-carbaguanosine(34) in tRNA + guanine. It functions in the pathway tRNA modification; tRNA-queuosine biosynthesis. Its function is as follows. Catalyzes the base-exchange of a guanine (G) residue with the queuine precursor 7-aminomethyl-7-deazaguanine (PreQ1) at position 34 (anticodon wobble position) in tRNAs with GU(N) anticodons (tRNA-Asp, -Asn, -His and -Tyr). Catalysis occurs through a double-displacement mechanism. The nucleophile active site attacks the C1' of nucleotide 34 to detach the guanine base from the RNA, forming a covalent enzyme-RNA intermediate. The proton acceptor active site deprotonates the incoming PreQ1, allowing a nucleophilic attack on the C1' of the ribose to form the product. After dissociation, two additional enzymatic reactions on the tRNA convert PreQ1 to queuine (Q), resulting in the hypermodified nucleoside queuosine (7-(((4,5-cis-dihydroxy-2-cyclopenten-1-yl)amino)methyl)-7-deazaguanosine). The chain is Queuine tRNA-ribosyltransferase from Salmonella arizonae (strain ATCC BAA-731 / CDC346-86 / RSK2980).